Here is a 463-residue protein sequence, read N- to C-terminus: Protein DML1 (463 aa).

This sequence belongs to the misato family.

Its subcellular location is the mitochondrion. In terms of biological role, involved in the partitioning of the mitochondrial organelle and mitochondrial DNA (mtDNA) inheritance. The polypeptide is Protein DML1 (DML1) (Debaryomyces hansenii (strain ATCC 36239 / CBS 767 / BCRC 21394 / JCM 1990 / NBRC 0083 / IGC 2968) (Yeast)).